A 419-amino-acid chain; its full sequence is Gustatory receptor for bitter taste 93a (419 aa).

Residues 1–55 are Cytoplasmic-facing; the sequence is MFSSSSAMTGKRAESWSRLLLLWLYRCARGLLVLSSSLDRDKLQLKATKQGSRNR. The chain crosses the membrane as a helical span at residues 56–76; that stretch reads FLHILWRCIVVMIYAGLWPML. Over 77–90 the chain is Extracellular; it reads TSAVIGKRLESYAD. The helical transmembrane segment at 91 to 111 threads the bilayer; sequence VLALAQSMSVSILAVISFVIQ. Topologically, residues 112–145 are cytoplasmic; it reads ARGENQFREVLNRYLALYQRICLTTRLRHLFPTK. The chain crosses the membrane as a helical span at residues 146–166; the sequence is FVVFFLLKLFFTLCGCFHEII. Residues 167–184 are Extracellular-facing; sequence PLFENSHFDDISQMVGTG. Residues 185–205 form a helical membrane-spanning segment; the sequence is FGIYMWLGTLCVLDACFLGFL. Residues 206 to 277 lie on the Cytoplasmic side of the membrane; it reads VSGILYEHMA…NSFRRILQWQ (72 aa). Residues 278–298 traverse the membrane as a helical segment; that stretch reads ILFYIYLNFINICLMLYQYIL. Over 299 to 305 the chain is Extracellular; that stretch reads HFLNDDE. Residues 306–326 form a helical membrane-spanning segment; the sequence is VVFVSIVMAFVKLANLVLLMM. Topologically, residues 327 to 383 are cytoplasmic; sequence CADYTVRQSEVPKKLPLDIVCSDMDERWDKSVETFLGQLQTQRLEIKVLGFFHLNNE. Residues 384–404 traverse the membrane as a helical segment; it reads FILLILSAIISYLFILIQFGI. Over 405–419 the chain is Extracellular; the sequence is TGGFEASEDIKNRFD.

This sequence belongs to the insect chemoreceptor superfamily. Gustatory receptor (GR) family. Gr93a subfamily. As to expression, in larvae, is expressed in neurons of the dorsal pharyngeal sense organs.

It localises to the cell membrane. Functionally, gustatory receptor required for response to the bitter in taste neurons. Gr93a cells respond to bitter compounds such as caffeine. Flies avoid bitter substances, suggesting that Gr93a neuron activity is sufficient to mediate avoidance behavior. This Drosophila melanogaster (Fruit fly) protein is Gustatory receptor for bitter taste 93a (Gr93a).